Consider the following 334-residue polypeptide: L-lactate dehydrogenase B-A chain (334 aa).

Residues 30-58 (GQVG…VEDR) and Arg-100 contribute to the NAD(+) site. Substrate is bound by residues Arg-107, Asn-139, and Arg-170. Asn-139 serves as a coordination point for NAD(+). His-194 functions as the Proton acceptor in the catalytic mechanism. Thr-249 contributes to the substrate binding site.

This sequence belongs to the LDH/MDH superfamily. LDH family. Homotetramer.

It localises to the cytoplasm. The catalysed reaction is (S)-lactate + NAD(+) = pyruvate + NADH + H(+). It functions in the pathway fermentation; pyruvate fermentation to lactate; (S)-lactate from pyruvate: step 1/1. This chain is L-lactate dehydrogenase B-A chain (ldhba), found in Danio rerio (Zebrafish).